The primary structure comprises 302 residues: RNA polymerase II holoenzyme cyclin-like subunit (302 aa).

The Cyclin N-terminal domain maps to 53–142 (QQLIKLGKRM…LGECEFSLIS (90 aa)).

This sequence belongs to the cyclin family. Cyclin C subfamily. In terms of assembly, component of the srb8-11 complex, a regulatory module of the Mediator complex.

It is found in the nucleus. Component of the srb8-11 complex. The srb8-11 complex is a regulatory module of the Mediator complex which is itself involved in regulation of basal and activated RNA polymerase II-dependent transcription. The srb8-11 complex may be involved in the transcriptional repression of a subset of genes regulated by Mediator. It may inhibit the association of the Mediator complex with RNA polymerase II to form the holoenzyme complex. The srb8-11 complex phosphorylates the C-terminal domain (CTD) of the largest subunit of RNA polymerase II. The chain is RNA polymerase II holoenzyme cyclin-like subunit (ssn8) from Aspergillus clavatus (strain ATCC 1007 / CBS 513.65 / DSM 816 / NCTC 3887 / NRRL 1 / QM 1276 / 107).